The sequence spans 301 residues: 4-hydroxy-tetrahydrodipicolinate synthase (301 aa).

Threonine 46 is a binding site for pyruvate. Tyrosine 134 functions as the Proton donor/acceptor in the catalytic mechanism. The Schiff-base intermediate with substrate role is filled by lysine 162. A pyruvate-binding site is contributed by isoleucine 203.

This sequence belongs to the DapA family. Homotetramer; dimer of dimers.

It localises to the cytoplasm. It catalyses the reaction L-aspartate 4-semialdehyde + pyruvate = (2S,4S)-4-hydroxy-2,3,4,5-tetrahydrodipicolinate + H2O + H(+). It participates in amino-acid biosynthesis; L-lysine biosynthesis via DAP pathway; (S)-tetrahydrodipicolinate from L-aspartate: step 3/4. Functionally, catalyzes the condensation of (S)-aspartate-beta-semialdehyde [(S)-ASA] and pyruvate to 4-hydroxy-tetrahydrodipicolinate (HTPA). This Anaplasma marginale (strain Florida) protein is 4-hydroxy-tetrahydrodipicolinate synthase.